We begin with the raw amino-acid sequence, 557 residues long: Eukaryotic translation initiation factor 3 subunit D-2 (557 aa).

The segment at 292–306 (QFDMLTVNETALEPP) is RNA gate. Positions 533-557 (FDSDNNDGEETSDDRPFLNSKDNKL) are disordered. Basic and acidic residues predominate over residues 545–557 (DDRPFLNSKDNKL).

This sequence belongs to the eIF-3 subunit D family. In terms of assembly, component of the eukaryotic translation initiation factor 3 (eIF-3) complex. The eIF-3 complex interacts with pix.

Its subcellular location is the cytoplasm. Its function is as follows. mRNA cap-binding component of the eukaryotic translation initiation factor 3 (eIF-3) complex, which is involved in protein synthesis of a specialized repertoire of mRNAs and, together with other initiation factors, stimulates binding of mRNA and methionyl-tRNAi to the 40S ribosome. The eIF-3 complex specifically targets and initiates translation of a subset of mRNAs involved in cell proliferation. In the eIF-3 complex, eif3d specifically recognizes and binds the 7-methylguanosine cap of a subset of mRNAs. The sequence is that of Eukaryotic translation initiation factor 3 subunit D-2 from Drosophila grimshawi (Hawaiian fruit fly).